The following is a 219-amino-acid chain: Ran-specific GTPase-activating protein 1 (219 aa).

3 stretches are compositionally biased toward basic and acidic residues: residues 1-12 (MAEVERKEEQAK), 33-45 (AVGDGKEGGEAKK), and 57-72 (PRKDEGKGGEERDNID). Residues 1-72 (MAEVERKEEQ…KGGEERDNID (72 aa)) form a disordered region. In terms of domain architecture, RanBD1 spans 70-210 (NIDAAEVVEK…YDLGRAHNEK (141 aa)).

The protein belongs to the RANBP1 family.

Its subcellular location is the cytoplasm. The protein localises to the nucleus. Its function is as follows. Important for the export of protein containing nuclear export signal (NES) out of the nucleus. This is Ran-specific GTPase-activating protein 1 (YRB1) from Encephalitozoon cuniculi (strain GB-M1) (Microsporidian parasite).